A 139-amino-acid polypeptide reads, in one-letter code: MKKTKLLNASLSHHIATLGHTESLVICDAGLPISNQVERIDLALEAGVPGFLQTVDVVISEMFVEHAVVAKEIREKNPQIHDALLDSLRKLSEQQGNCIAVEYVEHEEFKVLSSESKVAVCTGEFSPYANIILYSGVPF.

His20 functions as the Proton donor in the catalytic mechanism. Residues Asp28, His106, and 128 to 130 (YAN) contribute to the substrate site.

This sequence belongs to the RbsD / FucU family. RbsD subfamily. In terms of assembly, homodecamer.

It localises to the cytoplasm. The catalysed reaction is beta-D-ribopyranose = beta-D-ribofuranose. Its pathway is carbohydrate metabolism; D-ribose degradation; D-ribose 5-phosphate from beta-D-ribopyranose: step 1/2. Catalyzes the interconversion of beta-pyran and beta-furan forms of D-ribose. This chain is D-ribose pyranase, found in Histophilus somni (strain 129Pt) (Haemophilus somnus).